Here is a 431-residue protein sequence, read N- to C-terminus: Trigger factor (431 aa).

Residues 164-249 (GNIAVIDFKG…IKEIKVKELP (86 aa)) enclose the PPIase FKBP-type domain.

It belongs to the FKBP-type PPIase family. Tig subfamily.

Its subcellular location is the cytoplasm. The enzyme catalyses [protein]-peptidylproline (omega=180) = [protein]-peptidylproline (omega=0). Functionally, involved in protein export. Acts as a chaperone by maintaining the newly synthesized protein in an open conformation. Functions as a peptidyl-prolyl cis-trans isomerase. This is Trigger factor from Clostridium tetani (strain Massachusetts / E88).